The primary structure comprises 147 residues: Deoxyuridine 5'-triphosphate nucleotidohydrolase (147 aa).

Residues 67–69, asparagine 80, and 84–86 each bind substrate; these read RSG and TID.

This sequence belongs to the dUTPase family. The cofactor is Mg(2+).

The enzyme catalyses dUTP + H2O = dUMP + diphosphate + H(+). The protein operates within pyrimidine metabolism; dUMP biosynthesis; dUMP from dCTP (dUTP route): step 2/2. This enzyme is involved in nucleotide metabolism: it produces dUMP, the immediate precursor of thymidine nucleotides and it decreases the intracellular concentration of dUTP so that uracil cannot be incorporated into DNA. In Syntrophotalea carbinolica (strain DSM 2380 / NBRC 103641 / GraBd1) (Pelobacter carbinolicus), this protein is Deoxyuridine 5'-triphosphate nucleotidohydrolase.